The following is a 291-amino-acid chain: m-AAA protease-interacting protein 1, mitochondrial (291 aa).

Residues 1-96 constitute a mitochondrion transit peptide; that stretch reads MALAARLLPQ…SFPACPQRSY (96 aa).

As to quaternary structure, interacts with AFG3L2. Interacts with SPG7. Interacts with SMDT1/EMRE (via the N-terminal transit peptide); interaction is direct and takes place before maturation of SMDT1/EMRE.

Its subcellular location is the mitochondrion matrix. Promotes sorting of SMDT1/EMRE in mitochondria by ensuring its maturation. Interacts with the transit peptide region of SMDT1/EMRE precursor protein in the mitochondrial matrix, leading to protect it against protein degradation by YME1L1, thereby ensuring SMDT1/EMRE maturation by the mitochondrial processing peptidase (PMPCA and PMPCB). In Homo sapiens (Human), this protein is m-AAA protease-interacting protein 1, mitochondrial.